The following is a 909-amino-acid chain: Villin-1 (909 aa).

Gelsolin-like repeat units lie at residues 29 to 79 (KQLI…VDSI), 149 to 189 (VRVK…QEKA), 262 to 305 (GNLH…TERK), 391 to 448 (LKVW…QDRA), 529 to 569 (MQAI…SDHE), and 631 to 672 (LKVK…KSKE). Disordered stretches follow at residues 733–781 (SLKG…CSSE) and 816–835 (DGVA…QKPR). Positions 752-762 (QSKDNASRDLQ) are enriched in basic and acidic residues. Phosphoserine is present on S780. Positions 844-909 (SLESLAYSYE…NKLKISLHLF (66 aa)) constitute an HP domain.

This sequence belongs to the villin/gelsolin family. In terms of tissue distribution, expressed in all tissues examined. Mainly detected in the vascular tissue and the pericycle of roots and in the vasculature of leaves. Not expressed in the root cap.

It localises to the cytoplasm. The protein localises to the cytoskeleton. In terms of biological role, binds actin and actin filament bundles in a Ca(2+)/calmodulin-insensitive manner, but is unable to sever, cap, and nucleate actin filament formation in vitro. Does not protect individual filaments from severing by VLN3 (AC O81645). This chain is Villin-1, found in Arabidopsis thaliana (Mouse-ear cress).